A 297-amino-acid polypeptide reads, in one-letter code: MSKIFVNPSAIRAGLADLEMAEETVDLINRNIEDNQAHLQGEPIEVDDLPEDMKRLHLDDEKSSNLGEMVRVGEGKYREDFQMDEGEDPNLLFQSYLDNVGVQIVRQMRSGERFLKIWSQTVEEIVSYVTVNFPNPPRRSSENKSTQTTGRELKKETTSAFSQRESQPSKARMVAQVAPGPPALEWSATNEEDDLSVEAEIAHQIAESFSKKYKFPSRSSGIFLYNFEQLKMNLDDIVKEAKNVPGVTRLAHDGSKIPLRCVLGYVALANSKKFQLLVEADKLSKIMQDDLNRYTSC.

The Nuclear export signal motif lies at 49–58 (LPEDMKRLHL). Phosphoserine; by host is present on residues S63 and S64. Positions 134-176 (PNPPRRSSENKSTQTTGRELKKETTSAFSQRESQPSKARMVAQ) are disordered. Positions 138 to 172 (RRSSENKSTQTTGRELKKETTSAFSQRESQPSKAR) are DYNLL1 and DYNLL2 binding. A compositionally biased stretch (polar residues) spans 158–169 (TSAFSQRESQPS). Residues S162 and S210 each carry the phosphoserine; by host PKC modification. Positions 211-214 (KKYK) match the Nuclear localization signal motif. A Phosphoserine; by host PKC modification is found at S271.

It belongs to the lyssavirus protein P family. As to quaternary structure, homotrimer when phosphorylated. This trimer is stabilized by binding to the L protein. Binds soluble protein N, and ribonucleocapsid. Interacts with host DYNLL1 and DYNLL2; this interaction may play a role in intracellular microtubule-dependent virus transport of incoming virus. Interacts with host STAT1, STAT2 and PML. Interacts with host TBK1. Binds host PML. Phosphorylated by host PKC and by an unknown kinase.

It localises to the virion. The protein resides in the host cytoplasm. The protein localises to the host nucleus. Functionally, non catalytic polymerase cofactor and regulatory protein that plays a role in viral transcription and replication. Stabilizes the RNA polymerase L to the N-RNA template and binds the soluble protein N, preventing it from encapsidating non-genomic RNA. Also inhibits host IFN-alpha and IFN-beta signaling by binding and retaining phosphorylated STAT1 in the cytoplasm or by inhibiting the DNA binding of STAT1 in the nucleus. Might be involved, through interaction with host dynein, in intracellular microtubule-dependent virus transport of incoming virus from the synapse toward the cell body. Inhibits interferon induction pathways by interacting with host TBK1 and preventing the formation of dynamic cytoplasmic condensates that have liquid properties and that are essential for interferon production. The chain is Phosphoprotein (P) from Rabies virus (strain China/MRV) (RABV).